We begin with the raw amino-acid sequence, 397 residues long: 8-amino-7-oxononanoate synthase (397 aa).

Residue arginine 23 coordinates substrate. 110 to 111 (GY) lines the pyridoxal 5'-phosphate pocket. A substrate-binding site is contributed by histidine 135. 3 residues coordinate pyridoxal 5'-phosphate: serine 181, histidine 209, and threonine 237. Position 240 is an N6-(pyridoxal phosphate)lysine (lysine 240). A substrate-binding site is contributed by threonine 354.

The protein belongs to the class-II pyridoxal-phosphate-dependent aminotransferase family. BioF subfamily. In terms of assembly, homodimer. Pyridoxal 5'-phosphate serves as cofactor.

The enzyme catalyses 6-carboxyhexanoyl-[ACP] + L-alanine + H(+) = (8S)-8-amino-7-oxononanoate + holo-[ACP] + CO2. The protein operates within cofactor biosynthesis; biotin biosynthesis. Functionally, catalyzes the decarboxylative condensation of pimeloyl-[acyl-carrier protein] and L-alanine to produce 8-amino-7-oxononanoate (AON), [acyl-carrier protein], and carbon dioxide. In Anaeromyxobacter sp. (strain Fw109-5), this protein is 8-amino-7-oxononanoate synthase.